The following is a 619-amino-acid chain: Type VI secretion system component TssF1 (619 aa).

In terms of assembly, interacts with TssA1.

Functionally, core component of the H1 type VI (H1-T6SS) secretion system that plays a role in the release of toxins targeting both eukaryotic and prokaryotic species. This chain is Type VI secretion system component TssF1, found in Pseudomonas aeruginosa (strain ATCC 15692 / DSM 22644 / CIP 104116 / JCM 14847 / LMG 12228 / 1C / PRS 101 / PAO1).